The following is a 100-amino-acid chain: MQLTPREVEKLMIYTLSDVAFKRKARGLKLNYPEAVSIITVTALEGARDGKSLEDVMKEASKVLTKDDVMEGVADLIPNVQVEAIFTDGSRLVTVHDPIK.

The protein belongs to the urease gamma subunit family. As to quaternary structure, heterotrimer of UreA (gamma), UreB (beta) and UreC (alpha) subunits. Three heterotrimers associate to form the active enzyme.

The protein localises to the cytoplasm. The enzyme catalyses urea + 2 H2O + H(+) = hydrogencarbonate + 2 NH4(+). The protein operates within nitrogen metabolism; urea degradation; CO(2) and NH(3) from urea (urease route): step 1/1. The chain is Urease subunit gamma from Yersinia rohdei.